The following is a 268-amino-acid chain: Large ribosomal subunit protein uL4 (268 aa).

Belongs to the universal ribosomal protein uL4 family. In terms of assembly, part of the 50S ribosomal subunit.

Its function is as follows. One of the primary rRNA binding proteins, this protein initially binds near the 5'-end of the 23S rRNA. It is important during the early stages of 50S assembly. It makes multiple contacts with different domains of the 23S rRNA in the assembled 50S subunit and ribosome. Functionally, forms part of the polypeptide exit tunnel. This chain is Large ribosomal subunit protein uL4, found in Nanoarchaeum equitans (strain Kin4-M).